A 437-amino-acid polypeptide reads, in one-letter code: Enolase (437 aa).

Glutamine 163 contributes to the (2R)-2-phosphoglycerate binding site. The active-site Proton donor is glutamate 205. Mg(2+) contacts are provided by aspartate 242, glutamate 285, and aspartate 312. Residues lysine 337, arginine 366, serine 367, and lysine 388 each coordinate (2R)-2-phosphoglycerate. Catalysis depends on lysine 337, which acts as the Proton acceptor.

It belongs to the enolase family. It depends on Mg(2+) as a cofactor.

It localises to the cytoplasm. The protein resides in the secreted. It is found in the cell surface. It catalyses the reaction (2R)-2-phosphoglycerate = phosphoenolpyruvate + H2O. It participates in carbohydrate degradation; glycolysis; pyruvate from D-glyceraldehyde 3-phosphate: step 4/5. Functionally, catalyzes the reversible conversion of 2-phosphoglycerate (2-PG) into phosphoenolpyruvate (PEP). It is essential for the degradation of carbohydrates via glycolysis. The sequence is that of Enolase from Nitratidesulfovibrio vulgaris (strain DP4) (Desulfovibrio vulgaris).